The primary structure comprises 62 residues: Large ribosomal subunit protein bL35 (62 aa).

The interval 25–62 (EQAYRSHLSQNKTTKQKRQARKSVQMHSSDVKRFKALI) is disordered. The span at 53-62 (SDVKRFKALI) shows a compositional bias: basic and acidic residues.

Belongs to the bacterial ribosomal protein bL35 family.

This chain is Large ribosomal subunit protein bL35, found in Mycoplasmopsis fermentans (Mycoplasma fermentans).